Here is a 98-residue protein sequence, read N- to C-terminus: uncharacterized protein (98 aa).

Residues K30–E98 enclose the MOSC domain.

This is an uncharacterized protein from Haemophilus influenzae (strain ATCC 51907 / DSM 11121 / KW20 / Rd).